Reading from the N-terminus, the 444-residue chain is Tubulin beta-6 chain (444 aa).

GTP-binding residues include Gln-11, Glu-69, Ser-138, Gly-142, Thr-143, Gly-144, Asn-204, and Asn-226. A Mg(2+)-binding site is contributed by Glu-69.

The protein belongs to the tubulin family. As to quaternary structure, dimer of alpha and beta chains. A typical microtubule is a hollow water-filled tube with an outer diameter of 25 nm and an inner diameter of 15 nM. Alpha-beta heterodimers associate head-to-tail to form protofilaments running lengthwise along the microtubule wall with the beta-tubulin subunit facing the microtubule plus end conferring a structural polarity. Microtubules usually have 13 protofilaments but different protofilament numbers can be found in some organisms and specialized cells. Mg(2+) is required as a cofactor. Expressed in roots, leaf sheaths, anthers, and suspension cultured cells.

The protein localises to the cytoplasm. Its subcellular location is the cytoskeleton. In terms of biological role, tubulin is the major constituent of microtubules, a cylinder consisting of laterally associated linear protofilaments composed of alpha- and beta-tubulin heterodimers. Microtubules grow by the addition of GTP-tubulin dimers to the microtubule end, where a stabilizing cap forms. Below the cap, tubulin dimers are in GDP-bound state, owing to GTPase activity of alpha-tubulin. The protein is Tubulin beta-6 chain (TUBB6) of Oryza sativa subsp. japonica (Rice).